A 268-amino-acid chain; its full sequence is Tetraspanin-5 (268 aa).

Residues 1–17 (MSGKHYKGPEVSCCIKY) lie on the Cytoplasmic side of the membrane. Residues 18–38 (FIFGFNVIFWFLGITFLGIGL) form a helical membrane-spanning segment. Over 39 to 61 (WAWNEKGVLSNISSITDLGGFDP) the chain is Extracellular. An N-linked (GlcNAc...) asparagine glycan is attached at asparagine 49. The helical transmembrane segment at 62-82 (VWLFLVVGGVMFILGFAGCIG) threads the bilayer. Residues 83-92 (ALRENTFLLK) lie on the Cytoplasmic side of the membrane. A helical transmembrane segment spans residues 93–113 (FFSVFLGIIFFLELTAGVLAF). The Extracellular portion of the chain corresponds to 114 to 232 (VFKDWIKDQL…PQFEKWLQDN (119 aa)). 4 cysteine pairs are disulfide-bonded: cysteine 153-cysteine 221, cysteine 154-cysteine 186, cysteine 170-cysteine 180, and cysteine 187-cysteine 200. 2 N-linked (GlcNAc...) asparagine glycosylation sites follow: asparagine 169 and asparagine 174. Asparagine 232 carries an N-linked (GlcNAc...) asparagine glycan. The helical transmembrane segment at 233-253 (LTIVAGIFIGIALLQIFGICL) threads the bilayer. Residues 254–268 (AQNLVSDIEAVRASW) lie on the Cytoplasmic side of the membrane.

It belongs to the tetraspanin (TM4SF) family. In terms of assembly, interacts with ADAM10; the interaction influences ADAM10 substrate specificity, endocytosis and turnover. In terms of processing, palmitoylated.

The protein localises to the cell membrane. In terms of biological role, part of TspanC8 subgroup, composed of 6 members that interact with the transmembrane metalloprotease ADAM10. This interaction is required for ADAM10 exit from the endoplasmic reticulum and for enzymatic maturation and trafficking to the cell surface as well as substrate specificity. Different TspanC8/ADAM10 complexes have distinct substrates. Promotes ADAM10-mediated cleavage of CD44. Seems to regulate VE-cadherin expression in endothelial cells probably through interaction with ADAM10, promoting leukocyte transmigration. This is Tetraspanin-5 from Homo sapiens (Human).